Here is a 1035-residue protein sequence, read N- to C-terminus: Cell-division control histidine kinase PdhS (1035 aa).

The segment at 1-613 (MSGSYPFIDI…HADGSEEPVD (613 aa)) is important for polar localization. The tract at residues 500-533 (QGLANTRAESETPVSETSSIEPVEPTPPVKTRSE) is disordered. The segment at 614 to 1035 (THLNAIAWRG…VFPPTRVLAD (422 aa)) is interaction with DivK. A PAS domain is found at 659–730 (HVEELKTILD…YLHGLSGNGV (72 aa)). In terms of domain architecture, Histidine kinase spans 802 to 1031 (RISHEIRTPL…VVEIVFPPTR (230 aa)). Phosphohistidine; by autocatalysis is present on histidine 805.

As to quaternary structure, interacts with DivK.

It localises to the cytoplasm. The catalysed reaction is ATP + protein L-histidine = ADP + protein N-phospho-L-histidine.. Functionally, functions as a polar differentiation marker. Essential protein that, by localizing in the old pole of dividing cells, controls cell division and maturation, probably through control of DivK phosphorylation status and cellular distribution, which in turn regulates CtrA, a transcriptional regulator of the minB operon. The asymmetrical localization of this protein is probably required for cells to enter a new division cycle. The polypeptide is Cell-division control histidine kinase PdhS (pdhS) (Brucella suis (strain ATCC 23445 / NCTC 10510)).